A 416-amino-acid polypeptide reads, in one-letter code: MFSFYFNDNKITKLLMVGYGSTGKSVCDFLANFIDITVDISQNDDEFVNYDLNSYDLITVSPGIPLNKSPYRALTKFKDKIVSDIDIFYQYIKDTKAKTIAVTGSNGKSTVVTMTDFVLKDLGYKSILVGNIGTPALNKIGEKFDYCVVEVSSFQINLFNCVRFDLGCIINVSPDHLDRYQNFEQYKQSKLNLAKFSNDFFVYDVHNGIKYAGEYQIIRGAIYRNSTKLLDIVETKLFGEHNLENIIVVLNILDRLGLDINQAIASIKKFKGLEHRCKIVKKVNGTTYINDSKGTNVGATIAALNSITNSKNIILLLGGVAKGGDFSLMIKSLDKYVKYVYIYGADKEYIESYIKGYCKYQLCNNMKQAFELASQKANSNEIVLLSPACASFDEFSGYAQRGEVFQNLVAQLEQKS.

104-110 (GSNGKST) contacts ATP.

Belongs to the MurCDEF family.

The protein localises to the cytoplasm. The enzyme catalyses UDP-N-acetyl-alpha-D-muramoyl-L-alanine + D-glutamate + ATP = UDP-N-acetyl-alpha-D-muramoyl-L-alanyl-D-glutamate + ADP + phosphate + H(+). It functions in the pathway cell wall biogenesis; peptidoglycan biosynthesis. Its function is as follows. Cell wall formation. Catalyzes the addition of glutamate to the nucleotide precursor UDP-N-acetylmuramoyl-L-alanine (UMA). In Francisella tularensis subsp. tularensis (strain WY96-3418), this protein is UDP-N-acetylmuramoylalanine--D-glutamate ligase.